Consider the following 187-residue polypeptide: Elongation factor P (187 aa).

It belongs to the elongation factor P family.

The protein localises to the cytoplasm. It participates in protein biosynthesis; polypeptide chain elongation. In terms of biological role, involved in peptide bond synthesis. Stimulates efficient translation and peptide-bond synthesis on native or reconstituted 70S ribosomes in vitro. Probably functions indirectly by altering the affinity of the ribosome for aminoacyl-tRNA, thus increasing their reactivity as acceptors for peptidyl transferase. The polypeptide is Elongation factor P (Flavobacterium psychrophilum (strain ATCC 49511 / DSM 21280 / CIP 103535 / JIP02/86)).